Consider the following 1348-residue polypeptide: Phosphoribosylformylglycinamidine synthase (1348 aa).

Residues 300-311 (GAATGAGGEIRD) and Ala-701 contribute to the ATP site. Residues Asp-702, Glu-741, Asn-745, and Asp-941 each coordinate Mg(2+). Ser-943 serves as a coordination point for ATP. Residues 1099-1348 (VAILREQGVN…MFRNARVWCG (250 aa)) enclose the Glutamine amidotransferase type-1 domain. Cys-1192 acts as the Nucleophile in catalysis. Residues His-1313 and Glu-1315 contribute to the active site.

In the N-terminal section; belongs to the FGAMS family. Monomer.

The protein localises to the cytoplasm. The enzyme catalyses N(2)-formyl-N(1)-(5-phospho-beta-D-ribosyl)glycinamide + L-glutamine + ATP + H2O = 2-formamido-N(1)-(5-O-phospho-beta-D-ribosyl)acetamidine + L-glutamate + ADP + phosphate + H(+). The protein operates within purine metabolism; IMP biosynthesis via de novo pathway; 5-amino-1-(5-phospho-D-ribosyl)imidazole from N(2)-formyl-N(1)-(5-phospho-D-ribosyl)glycinamide: step 1/2. Phosphoribosylformylglycinamidine synthase involved in the purines biosynthetic pathway. Catalyzes the ATP-dependent conversion of formylglycinamide ribonucleotide (FGAR) and glutamine to yield formylglycinamidine ribonucleotide (FGAM) and glutamate. This chain is Phosphoribosylformylglycinamidine synthase, found in Xanthomonas axonopodis pv. citri (strain 306).